A 498-amino-acid polypeptide reads, in one-letter code: Ribulose bisphosphate carboxylase large chain (498 aa).

A propeptide spanning residues 1–2 is cleaved from the precursor; the sequence is MS. Pro3 is modified (N-acetylproline). Lys14 carries the N6,N6,N6-trimethyllysine modification. 2 residues coordinate substrate: Asn123 and Thr173. Lys175 (proton acceptor) is an active-site residue. Lys177 contributes to the substrate binding site. Mg(2+)-binding residues include Lys201, Asp203, and Glu204. Lys201 carries the post-translational modification N6-carboxylysine. The Proton acceptor role is filled by His294. Substrate-binding residues include Arg295, His327, and Ser379. Residues 473 to 498 form a disordered region; sequence DTLDPNDKKQRDNEDTLADKFFGDKG.

Belongs to the RuBisCO large chain family. Type I subfamily. Heterohexadecamer of 8 large chains and 8 small chains; disulfide-linked. The disulfide link is formed within the large subunit homodimers. The cofactor is Mg(2+). Post-translationally, the disulfide bond which can form in the large chain dimeric partners within the hexadecamer appears to be associated with oxidative stress and protein turnover.

The protein resides in the plastid. It catalyses the reaction 2 (2R)-3-phosphoglycerate + 2 H(+) = D-ribulose 1,5-bisphosphate + CO2 + H2O. The enzyme catalyses D-ribulose 1,5-bisphosphate + O2 = 2-phosphoglycolate + (2R)-3-phosphoglycerate + 2 H(+). Functionally, ruBisCO catalyzes two reactions: the carboxylation of D-ribulose 1,5-bisphosphate, the primary event in carbon dioxide fixation, as well as the oxidative fragmentation of the pentose substrate in the photorespiration process. Both reactions occur simultaneously and in competition at the same active site. This is Ribulose bisphosphate carboxylase large chain from Cuscuta exaltata (Tall dodder).